Reading from the N-terminus, the 1194-residue chain is Pre-mRNA-processing ATP-dependent RNA helicase prp-5 (1194 aa).

Disordered stretches follow at residues 1–201, 224–248, and 452–484; these read MARL…KEAK, AVVG…ASPA, and ASGE…DDYG. 2 stretches are compositionally biased toward basic and acidic residues: residues 21-37 and 44-154; these read RKDD…GPVD and SPID…RDQP. Residues 156–176 are compositionally biased toward polar residues; it reads PGNTTAKENEPAKSTPTQPQT. The span at 177–186 shows a compositional bias: basic and acidic residues; sequence EAEKKAERLR. The span at 232 to 248 shows a compositional bias: low complexity; the sequence is SPAPASPAAAESPASPA. Positions 455 to 469 are enriched in basic and acidic residues; the sequence is EESHSKADTLTEKKN. The Q motif signature appears at 561–589; that stretch reads QKWSQCGLTRPILDTIESLGFEKPTPIQM. In terms of domain architecture, Helicase ATP-binding spans 592 to 770; sequence LPVIMSGRDV…KKVLRDPVEI (179 aa). 605–612 contacts ATP; sequence AKTGSGKT. The DEAD box signature appears at 718-721; that stretch reads DEAD. Residues 797-945 enclose the Helicase C-terminal domain; sequence RLLELLGELY…PVPDRLNEMR (149 aa). Disordered regions lie at residues 952–1011 and 1025–1056; these read VKAG…DKTK and DASK…SGGA. Basic and acidic residues-rich tracts occupy residues 967–980, 997–1011, and 1025–1036; these read GLEK…AARM, EDAP…DKTK, and DASKAETEDKHA.

The protein belongs to the DEAD box helicase family. DDX46/PRP5 subfamily.

The protein resides in the nucleus. The enzyme catalyses ATP + H2O = ADP + phosphate + H(+). In terms of biological role, ATP-dependent RNA helicase involved spliceosome assembly and in nuclear splicing. Catalyzes an ATP-dependent conformational change of U2 snRNP. Bridges U1 and U2 snRNPs and enables stable U2 snRNP association with intron RNA. In Neurospora crassa (strain ATCC 24698 / 74-OR23-1A / CBS 708.71 / DSM 1257 / FGSC 987), this protein is Pre-mRNA-processing ATP-dependent RNA helicase prp-5 (prp-5).